The chain runs to 533 residues: uncharacterized protein (533 aa).

4 helical membrane-spanning segments follow: residues 1–21 (MLAF…VAFI), 135–155 (LPRF…IAAL), 193–213 (AIAA…AILA), and 472–492 (LLVN…PLVG).

The protein resides in the cell membrane. This is an uncharacterized protein from Mycobacterium bovis (strain ATCC BAA-935 / AF2122/97).